A 426-amino-acid chain; its full sequence is 3-phosphoshikimate 1-carboxyvinyltransferase (426 aa).

3 residues coordinate 3-phosphoshikimate: lysine 22, serine 23, and arginine 27. Lysine 22 provides a ligand contact to phosphoenolpyruvate. 2 residues coordinate phosphoenolpyruvate: glycine 96 and arginine 124. Serine 170, serine 171, glutamine 172, serine 198, aspartate 314, asparagine 337, and lysine 341 together coordinate 3-phosphoshikimate. Residue glutamine 172 coordinates phosphoenolpyruvate. The active-site Proton acceptor is aspartate 314. Residues arginine 345, arginine 387, and lysine 412 each coordinate phosphoenolpyruvate.

It belongs to the EPSP synthase family. Monomer.

The protein resides in the cytoplasm. The enzyme catalyses 3-phosphoshikimate + phosphoenolpyruvate = 5-O-(1-carboxyvinyl)-3-phosphoshikimate + phosphate. The protein operates within metabolic intermediate biosynthesis; chorismate biosynthesis; chorismate from D-erythrose 4-phosphate and phosphoenolpyruvate: step 6/7. Its function is as follows. Catalyzes the transfer of the enolpyruvyl moiety of phosphoenolpyruvate (PEP) to the 5-hydroxyl of shikimate-3-phosphate (S3P) to produce enolpyruvyl shikimate-3-phosphate and inorganic phosphate. The sequence is that of 3-phosphoshikimate 1-carboxyvinyltransferase from Shewanella baltica (strain OS185).